A 335-amino-acid polypeptide reads, in one-letter code: Heat-inducible transcription repressor HrcA (335 aa).

This sequence belongs to the HrcA family.

Negative regulator of class I heat shock genes (grpE-dnaK-dnaJ and groELS operons). Prevents heat-shock induction of these operons. The protein is Heat-inducible transcription repressor HrcA of Mesomycoplasma hyopneumoniae (strain 232) (Mycoplasma hyopneumoniae).